A 135-amino-acid polypeptide reads, in one-letter code: Aspartate 1-decarboxylase (135 aa).

The active-site Schiff-base intermediate with substrate; via pyruvic acid is the Ser25. Residue Ser25 is modified to Pyruvic acid (Ser). Thr57 is a binding site for substrate. Tyr58 (proton donor) is an active-site residue. 73–75 is a substrate binding site; that stretch reads GAA.

It belongs to the PanD family. Heterooctamer of four alpha and four beta subunits. Requires pyruvate as cofactor. Is synthesized initially as an inactive proenzyme, which is activated by self-cleavage at a specific serine bond to produce a beta-subunit with a hydroxyl group at its C-terminus and an alpha-subunit with a pyruvoyl group at its N-terminus.

Its subcellular location is the cytoplasm. It catalyses the reaction L-aspartate + H(+) = beta-alanine + CO2. It participates in cofactor biosynthesis; (R)-pantothenate biosynthesis; beta-alanine from L-aspartate: step 1/1. Its function is as follows. Catalyzes the pyruvoyl-dependent decarboxylation of aspartate to produce beta-alanine. The chain is Aspartate 1-decarboxylase from Mycolicibacterium vanbaalenii (strain DSM 7251 / JCM 13017 / BCRC 16820 / KCTC 9966 / NRRL B-24157 / PYR-1) (Mycobacterium vanbaalenii).